A 230-amino-acid chain; its full sequence is Thymidylate kinase (230 aa).

ATP is bound at residue 20 to 27 (GGEGAGKS).

Belongs to the thymidylate kinase family.

The catalysed reaction is dTMP + ATP = dTDP + ADP. Its function is as follows. Phosphorylation of dTMP to form dTDP in both de novo and salvage pathways of dTTP synthesis. The sequence is that of Thymidylate kinase from Rhodopseudomonas palustris (strain TIE-1).